We begin with the raw amino-acid sequence, 81 residues long: Prophage excisionase-like protein (81 aa).

This sequence to lambdoid phages excisionases.

This chain is Prophage excisionase-like protein (xisE), found in Escherichia coli (strain K12).